Here is a 150-residue protein sequence, read N- to C-terminus: Large ribosomal subunit protein uL11 (150 aa).

The protein belongs to the universal ribosomal protein uL11 family. In terms of assembly, part of the ribosomal stalk of the 50S ribosomal subunit. Interacts with L10 and the large rRNA to form the base of the stalk. L10 forms an elongated spine to which L12 dimers bind in a sequential fashion forming a multimeric L10(L12)X complex. One or more lysine residues are methylated.

Its function is as follows. Forms part of the ribosomal stalk which helps the ribosome interact with GTP-bound translation factors. The polypeptide is Large ribosomal subunit protein uL11 (Ureaplasma urealyticum serovar 10 (strain ATCC 33699 / Western)).